A 524-amino-acid chain; its full sequence is Beta-glucosidase 23 (524 aa).

The first 24 residues, 1-24 (MVLQKLPLIGLLLLLTIVASPANA), serve as a signal peptide directing secretion. Residue Gln-54 participates in a beta-D-glucoside binding. A glycan (N-linked (GlcNAc...) asparagine) is linked at Asn-60. Residues His-157 and 202 to 203 (NE) each bind a beta-D-glucoside. Catalysis depends on Glu-203, which acts as the Proton donor. The cysteines at positions 222 and 230 are disulfide-linked. Residues Tyr-346 and Glu-418 each coordinate a beta-D-glucoside. The active-site Nucleophile is the Glu-418. N-linked (GlcNAc...) asparagine glycosylation is present at Asn-461. A beta-D-glucoside contacts are provided by residues Trp-468, 475–476 (EW), and Phe-484. Asn-494 carries N-linked (GlcNAc...) asparagine glycosylation. Positions 521 to 524 (KDEL) match the Prevents secretion from ER motif.

The protein belongs to the glycosyl hydrolase 1 family. Homodimers. Binds to the deubiquitinating enzyme AMSH3. The inactive form interacts with PBP1/JAL30 to form the PYK10 complex, at least composed of PYK10/BGLU23, BGLU21, BGLU22, JAL22, JAL23, PBP1/JAL30, PBP2/JAL31, JAL32, JAL33, JAL34, JAL35, GLL22 and GLL23. Forms interchain disulfide bonds. As to expression, expressed exclusively in roots.

It is found in the endoplasmic reticulum lumen. The enzyme catalyses Hydrolysis of terminal, non-reducing beta-D-glucosyl residues with release of beta-D-glucose.. Its activity is regulated as follows. Activated by tissue damage and upon binding to PBP1 or PBP2. Beta-D-glucosidase active on scopolin &gt; esculin &gt;&gt; 4-MU-glucoside &gt;&gt; DIMBOA-glucoside. No activity with pNP-glucoside, oNP-glucoside and sinigrin as substrates. May possess beta-D-fucosidase activity. Required for the beneficial interaction with the endophytic fungus P.indica. May participate in the control of root colonization by P.indica by repressing defense responses and modulating other responses required for a mutualistic interaction. The protein is Beta-glucosidase 23 of Arabidopsis thaliana (Mouse-ear cress).